The sequence spans 466 residues: Serine/threonine-protein kinase SSN3 (466 aa).

In terms of domain architecture, Protein kinase spans 32–396 (YKILGFISSG…ARDALRHPWF (365 aa)). 38–46 (ISSGTYGRV) contacts ATP. The interval 58 to 105 (ASAKSALPSSTRAALSLPKDKLPSPSFTEDSDPLNNPEMCMRPGDRPA) is disordered. Lysine 114 serves as a coordination point for ATP. The Proton acceptor role is filled by aspartate 216. The disordered stretch occupies residues 421–466 (THEDNGDAKMGSLPQSMAGGRLPSSSNFRPASGNIVQPAARKKARI).

It belongs to the protein kinase superfamily. CMGC Ser/Thr protein kinase family. CDC2/CDKX subfamily. In terms of assembly, component of the SRB8-11 complex, a regulatory module of the Mediator complex. It depends on Mg(2+) as a cofactor.

It localises to the nucleus. The catalysed reaction is L-seryl-[protein] + ATP = O-phospho-L-seryl-[protein] + ADP + H(+). It carries out the reaction L-threonyl-[protein] + ATP = O-phospho-L-threonyl-[protein] + ADP + H(+). It catalyses the reaction [DNA-directed RNA polymerase] + ATP = phospho-[DNA-directed RNA polymerase] + ADP + H(+). Functionally, component of the SRB8-11 complex. The SRB8-11 complex is a regulatory module of the Mediator complex which is itself involved in regulation of basal and activated RNA polymerase II-dependent transcription. The SRB8-11 complex may be involved in the transcriptional repression of a subset of genes regulated by Mediator. It may inhibit the association of the Mediator complex with RNA polymerase II to form the holoenzyme complex. The SRB8-11 complex phosphorylates the C-terminal domain (CTD) of the largest subunit of RNA polymerase II. In Cryptococcus neoformans var. neoformans serotype D (strain B-3501A) (Filobasidiella neoformans), this protein is Serine/threonine-protein kinase SSN3 (SSN3).